A 329-amino-acid polypeptide reads, in one-letter code: Malate dehydrogenase (329 aa).

Position 12–18 (12–18) interacts with NAD(+); that stretch reads GAAGQIG. The substrate site is built by Arg-95 and Arg-101. NAD(+) is bound by residues Asn-108, Gln-115, and 132–134; that span reads VGN. Residues Asn-134 and Arg-165 each contribute to the substrate site. His-190 serves as the catalytic Proton acceptor.

This sequence belongs to the LDH/MDH superfamily. MDH type 2 family.

It catalyses the reaction (S)-malate + NAD(+) = oxaloacetate + NADH + H(+). In terms of biological role, catalyzes the reversible oxidation of malate to oxaloacetate. This chain is Malate dehydrogenase, found in Herminiimonas arsenicoxydans.